The chain runs to 440 residues: Protein OSB3, chloroplastic/mitochondrial (440 aa).

Residues 1–61 constitute a chloroplast and mitochondrion transit peptide; that stretch reads MNLISRTLTR…AKVSVKPPLN (61 aa). Residues 80–178 enclose the SSB domain; the sequence is ISNWINLIGF…VMVQNLNFVQ (99 aa). PDF region stretches follow at residues 218-270, 294-342, and 380-428; these read WKHL…LKLE, WKDL…SKLP, and WKNL…SKLP.

In terms of tissue distribution, expressed primarily in the female gametophyte and in the floral abscission zone.

It localises to the mitochondrion. The protein localises to the plastid. It is found in the chloroplast. Its function is as follows. Binds single-stranded DNA. In Arabidopsis thaliana (Mouse-ear cress), this protein is Protein OSB3, chloroplastic/mitochondrial (OSB3).